Here is a 455-residue protein sequence, read N- to C-terminus: Eukaryotic translation initiation factor 3 subunit E (455 aa).

The PCI domain maps to 256–425; that stretch reads TDLFFSPAYI…GTVIMNHPPQ (170 aa).

This sequence belongs to the eIF-3 subunit E family. In terms of assembly, component of the eukaryotic translation initiation factor 3 (eIF-3) complex.

It localises to the cytoplasm. Component of the eukaryotic translation initiation factor 3 (eIF-3) complex, which is involved in protein synthesis of a specialized repertoire of mRNAs and, together with other initiation factors, stimulates binding of mRNA and methionyl-tRNAi to the 40S ribosome. The eIF-3 complex specifically targets and initiates translation of a subset of mRNAs involved in cell proliferation. The polypeptide is Eukaryotic translation initiation factor 3 subunit E (int6) (Neosartorya fischeri (strain ATCC 1020 / DSM 3700 / CBS 544.65 / FGSC A1164 / JCM 1740 / NRRL 181 / WB 181) (Aspergillus fischerianus)).